The following is a 210-amino-acid chain: uncharacterized protein (210 aa).

This is an uncharacterized protein from Dictyostelium discoideum (Social amoeba).